The chain runs to 66 residues: Large ribosomal subunit protein bL33c (66 aa).

The protein belongs to the bacterial ribosomal protein bL33 family.

It is found in the plastid. It localises to the chloroplast. The protein is Large ribosomal subunit protein bL33c of Adiantum capillus-veneris (Maidenhair fern).